The sequence spans 342 residues: Olfactory receptor 51F2 (342 aa).

At 1–39 (MTETSLSSQCFPMSVLNNTIAEPLIFLLMGIPGLKATQY) the chain is on the extracellular side. The N-linked (GlcNAc...) asparagine glycan is linked to N17. The chain crosses the membrane as a helical span at residues 40–60 (WISIPFCLLYVVAVSGNSMIL). At 61-68 (FVVLCERS) the chain is on the cytoplasmic side. A helical transmembrane segment spans residues 69–89 (LHKPMYYFLSMLSATDLSLSL). At 90 to 113 (CTLSTTLGVFWFEAREINLNACIA) the chain is on the extracellular side. C111 and C203 form a disulfide bridge. Residues 114–134 (QMFFLHGFTFMESGVLLAMAF) traverse the membrane as a helical segment. Topologically, residues 135-153 (DRFVAICYPLRYTTILTNA) are cytoplasmic. Residues 154-174 (RIAKIGMSMLIRNVAVMLPVM) traverse the membrane as a helical segment. At 175 to 210 (LFVKRLSFCSSMVLSHSYCYHVDLIQLSCTDNRINS) the chain is on the extracellular side. Residues 211–231 (ILGLFALLSTTGFDCPCILLS) traverse the membrane as a helical segment. Topologically, residues 232–251 (YILIIRSVLSIASSEERRKA) are cytoplasmic. A helical membrane pass occupies residues 252 to 272 (FNTCTSHISAVSIFYLPLISL). Topologically, residues 273–287 (SLVHRYGHSAPPFVH) are extracellular. Residues 288–308 (IIMANVFLLIPPVLNPIIYSV) traverse the membrane as a helical segment. At 309 to 342 (KIKQIQKAIIKVLIQKHSKSNHQLFLIRDKAIYE) the chain is on the cytoplasmic side.

Belongs to the G-protein coupled receptor 1 family.

The protein localises to the cell membrane. In terms of biological role, odorant receptor. This chain is Olfactory receptor 51F2 (OR51F2), found in Homo sapiens (Human).